Here is an 876-residue protein sequence, read N- to C-terminus: DNA mismatch repair protein MutS (876 aa).

628–635 (GPNMAGKS) is an ATP binding site.

Belongs to the DNA mismatch repair MutS family.

Its function is as follows. This protein is involved in the repair of mismatches in DNA. It is possible that it carries out the mismatch recognition step. This protein has a weak ATPase activity. This Chlorobaculum parvum (strain DSM 263 / NCIMB 8327) (Chlorobium vibrioforme subsp. thiosulfatophilum) protein is DNA mismatch repair protein MutS.